The chain runs to 480 residues: UDP-N-acetylmuramoylalanine--D-glutamate ligase (480 aa).

110 to 116 (GTNGKST) contributes to the ATP binding site.

The protein belongs to the MurCDEF family.

The protein resides in the cytoplasm. It carries out the reaction UDP-N-acetyl-alpha-D-muramoyl-L-alanine + D-glutamate + ATP = UDP-N-acetyl-alpha-D-muramoyl-L-alanyl-D-glutamate + ADP + phosphate + H(+). It participates in cell wall biogenesis; peptidoglycan biosynthesis. Cell wall formation. Catalyzes the addition of glutamate to the nucleotide precursor UDP-N-acetylmuramoyl-L-alanine (UMA). This chain is UDP-N-acetylmuramoylalanine--D-glutamate ligase, found in Synechococcus sp. (strain JA-2-3B'a(2-13)) (Cyanobacteria bacterium Yellowstone B-Prime).